The primary structure comprises 441 residues: Dolichyl-diphosphooligosaccharide--protein glycosyltransferase 48 kDa subunit (441 aa).

The N-terminal stretch at 1–28 (MATALSGGFSKNALFILSAALMLQAVLG) is a signal peptide. The Lumenal portion of the chain corresponds to 29 to 410 (DGKTLVLLDN…TQYERFIPSA (382 aa)). The chain crosses the membrane as a helical span at residues 411 to 431 (FPYYASAFSMMAGLFVFSVVF). At 432–441 (LHMREKEKSD) the chain is on the cytoplasmic side.

It belongs to the DDOST 48 kDa subunit family. In terms of assembly, component of the oligosaccharyltransferase (OST) complex.

The protein resides in the endoplasmic reticulum membrane. It functions in the pathway protein modification; protein glycosylation. Its function is as follows. Subunit of the oligosaccharyl transferase (OST) complex that catalyzes the initial transfer of a defined glycan (Glc(3)Man(9)GlcNAc(2) in eukaryotes) from the lipid carrier dolichol-pyrophosphate to an asparagine residue within an Asn-X-Ser/Thr consensus motif in nascent polypeptide chains, the first step in protein N-glycosylation. N-glycosylation occurs cotranslationally and the complex associates with the Sec61 complex at the channel-forming translocon complex that mediates protein translocation across the endoplasmic reticulum (ER). All subunits are required for a maximal enzyme activity. Required for the assembly of both SST3A- and SS3B-containing OST complexes. The protein is Dolichyl-diphosphooligosaccharide--protein glycosyltransferase 48 kDa subunit of Danio rerio (Zebrafish).